Reading from the N-terminus, the 393-residue chain is Putative zinc metalloprotease Rip3 (393 aa).

2 helical membrane-spanning segments follow: residues 10-30 and 45-65; these read IAGF…LFTW and AVVY…SLLA. His-66 is a Zn(2+) binding site. Residue Glu-67 is part of the active site. His-70 lines the Zn(2+) pocket. The next 4 membrane-spanning stretches (helical) occupy residues 77 to 97, 108 to 128, 136 to 156, and 207 to 227; these read AGVS…ALGG, IAFA…ALAI, PAIV…LGLF, and FVAG…FIFA. 2 consecutive CBS domains span residues 251-308 and 315-376; these read MTAQ…RRST and ALPL…AQPE.

This sequence belongs to the peptidase M50B family. Zn(2+) serves as cofactor.

The protein localises to the cell membrane. This chain is Putative zinc metalloprotease Rip3 (rip3), found in Mycobacterium tuberculosis (strain ATCC 35801 / TMC 107 / Erdman).